We begin with the raw amino-acid sequence, 490 residues long: Betaine aldehyde dehydrogenase (490 aa).

Residues Ile27 and Asp93 each coordinate K(+). 150-152 (GAW) provides a ligand contact to NAD(+). Residue Lys162 is the Charge relay system of the active site. 176-179 (KPSE) serves as a coordination point for NAD(+). A K(+)-binding site is contributed by Val180. 230–233 (GTTT) lines the NAD(+) pocket. Leu246 contacts K(+). Glu252 serves as the catalytic Proton acceptor. 3 residues coordinate NAD(+): Gly254, Cys286, and Glu387. The active-site Nucleophile is Cys286. Cys286 bears the Cysteine sulfenic acid (-SOH) mark. K(+)-binding residues include Lys457 and Gly460. Glu464 (charge relay system) is an active-site residue.

It belongs to the aldehyde dehydrogenase family. As to quaternary structure, dimer of dimers. It depends on K(+) as a cofactor.

It carries out the reaction betaine aldehyde + NAD(+) + H2O = glycine betaine + NADH + 2 H(+). The protein operates within amine and polyamine biosynthesis; betaine biosynthesis via choline pathway; betaine from betaine aldehyde: step 1/1. Functionally, involved in the biosynthesis of the osmoprotectant glycine betaine. Catalyzes the irreversible oxidation of betaine aldehyde to the corresponding acid. The protein is Betaine aldehyde dehydrogenase of Pseudomonas entomophila (strain L48).